Here is a 181-residue protein sequence, read N- to C-terminus: MFAMVNGLRSYSQQAIQAARYIGQGFVVTLDHMNRLPMTIQYPYEKLIPSERFRGRIHFEFDKCIACEVCVRVCPINLPVVDWELKESVRKKQLKNYSIDFAVCIFCGNCVEYCPTNCLSMTEEYELSTYDRHELNYDQIALGRLPVSVVQDPTTQTVSGLNYLSKGVMEGHPDSRSVTNF.

2 4Fe-4S ferredoxin-type domains span residues 55-84 and 95-124; these read GRIHFEFDKCIACEVCVRVCPINLPVVDWE and KNYSIDFAVCIFCGNCVEYCPTNCLSMTEE. The [4Fe-4S] cluster site is built by C64, C67, C70, C74, C104, C107, C110, and C114.

The protein belongs to the complex I 23 kDa subunit family. As to quaternary structure, NDH is composed of at least 16 different subunits, 5 of which are encoded in the nucleus. [4Fe-4S] cluster is required as a cofactor.

Its subcellular location is the plastid. The protein resides in the chloroplast thylakoid membrane. The enzyme catalyses a plastoquinone + NADH + (n+1) H(+)(in) = a plastoquinol + NAD(+) + n H(+)(out). The catalysed reaction is a plastoquinone + NADPH + (n+1) H(+)(in) = a plastoquinol + NADP(+) + n H(+)(out). Functionally, NDH shuttles electrons from NAD(P)H:plastoquinone, via FMN and iron-sulfur (Fe-S) centers, to quinones in the photosynthetic chain and possibly in a chloroplast respiratory chain. The immediate electron acceptor for the enzyme in this species is believed to be plastoquinone. Couples the redox reaction to proton translocation, and thus conserves the redox energy in a proton gradient. In Angiopteris evecta (Mule's foot fern), this protein is NAD(P)H-quinone oxidoreductase subunit I, chloroplastic.